The chain runs to 5641 residues: Cyclochlorotine synthetase (5641 aa).

The interval Pro-95–Gln-124 is disordered. The span at Lys-111 to Gln-124 shows a compositional bias: basic and acidic residues. The adenylation (A) domain 1 stretch occupies residues Phe-217 to Arg-622. Positions Thr-816–Ala-892 constitute a Carrier 1 domain. A thiolation (T) domain 1 region spans residues Lys-821–Lys-889. An O-(pantetheine 4'-phosphoryl)serine modification is found at Ser-853. The interval Glu-926–Pro-1333 is condensation (C) domain 1. The segment at Asp-1390–Ile-1768 is adenylation (A) domain 2. The region spanning Ile-1902–Thr-1978 is the Carrier 2 domain. Residues Lys-1907–Thr-1975 form a thiolation (T) domain 2 region. Ser-1939 carries the O-(pantetheine 4'-phosphoryl)serine modification. The tract at residues Asp-2022–Lys-2438 is condensation (C) domain 2. Residues Ala-2459–Arg-2859 are adenylation (A) domain 3. The Carrier 3 domain maps to Gly-2976–His-3052. The tract at residues Pro-2977–Gln-3049 is thiolation (T) domain 3. Ser-3013 is subject to O-(pantetheine 4'-phosphoryl)serine. The interval Asp-3089–Thr-3482 is condensation (C) domain 3. Residues Val-3523–Leu-3873 are adenylation (A) domain 4. The 77-residue stretch at Ile-4005 to Ile-4081 folds into the Carrier 4 domain. Positions Thr-4010–Ala-4078 are thiolation (T) domain 4. An O-(pantetheine 4'-phosphoryl)serine modification is found at Ser-4042. The segment at Lys-4123–Asp-4549 is condensation (C) domain 4. The segment at Gln-4574–Arg-4982 is adenylation (A) domain 5. The region spanning Pro-5118 to Ser-5194 is the Carrier 5 domain. A thiolation (T) domain 5 region spans residues Glu-5123–Ser-5191. Ser-5155 is modified (O-(pantetheine 4'-phosphoryl)serine). The condensation (C) domain 5 stretch occupies residues Ala-5260–Ser-5556.

Belongs to the NRP synthetase family.

Its pathway is mycotoxin biosynthesis. In terms of biological role, nonribosomal peptide synthetase; part of the gene cluster that mediates the biosynthesis of the mycotoxin cyclochlorotine, a hepatotoxic and carcinogenic cyclic chlorinated pentapeptide. Within the pathway, The NRPS cctN initially catalyzes the condensation of L-serine (Ser), Pro, L-2-aminobutyrate (2Abu), Ser, and beta-Phe in this order. During the chain elongation, side-chain hydroxy group of Ser4 would be used as a nucleophile, giving isocyclotine as a product of terminal condensation-like (CT) domain-catalyzed cyclization. After the dichlorination of Pro2 catalyzed by cctP2 to produce isocyclochlorotine, the cctO-mediated transacylation of isocyclochlorotine can furnish cyclochlorotine. The subsequent hydroxylation of cyclochlorotine by cctR yields hydroxycyclochlorotine as the final product. CctP1 probably acts as a phenylalanine aminomutase and provides the uncommon building block beta-Phe. Furthermore, 2Abu can be synthesized from threonine by one of the threonine dehydratases and transaminases localized outside of the cluster. The functions of the remaining proteins encoded by the cluster, cctM and cctT, have not been identified yet. In Talaromyces islandicus (Penicillium islandicum), this protein is Cyclochlorotine synthetase.